We begin with the raw amino-acid sequence, 263 residues long: Lens fiber major intrinsic protein (263 aa).

At 1–9 the chain is on the cytoplasmic side; sequence MWELRSASF. Residues 10-29 traverse the membrane as a helical segment; sequence WRAIFAEFFATLFYVFFGLG. Topologically, residues 30-41 are extracellular; it reads ASLRWTPGPLHV. The chain crosses the membrane as a helical span at residues 42–59; that stretch reads LQVALAFGLALATLVQAV. At 60 to 61 the chain is on the cytoplasmic side; sequence GH. Residues 62–77 constitute an intramembrane region (discontinuously helical); that stretch reads ISGAHVNPAVTFAFLV. The short motif at 68–70 is the NPA 1 element; the sequence is NPA. The Cytoplasmic segment spans residues 78-82; it reads GSQMS. The helical transmembrane segment at 83-106 threads the bilayer; the sequence is LLRAFCYMAAQLLGAVAGAAVLYS. The Extracellular segment spans residues 107 to 127; it reads VTPPAVRGNLALNTLHPGVSV. Residues 128-148 form a helical membrane-spanning segment; it reads GQATTVEIFLTLQFVLCIFAT. Over 149-156 the chain is Cytoplasmic; it reads YDERRNGR. Residues 157–175 traverse the membrane as a helical segment; that stretch reads LGSVALAVGFSLTLGHLFG. The Extracellular segment spans residues 176 to 178; the sequence is MYY. An intramembrane region (discontinuously helical) is located at residues 179–193; it reads TGAGMNPARSFAPAI. Positions 184-186 match the NPA 2 motif; sequence NPA. Over 194-200 the chain is Extracellular; the sequence is LTRNFTN. A helical membrane pass occupies residues 201-222; it reads HWVYWVGPIIGGGLGSLLYDFL. Over 223-263 the chain is Cytoplasmic; that stretch reads LFPRLKSVSERLSILKGARPSDSNGQPEGTGEPVELKTQAL. The tract at residues 227-237 is interaction with CALM; sequence LKSVSERLSIL. Phosphoserine is present on residues S235, S243, and S245. The disordered stretch occupies residues 240–263; it reads ARPSDSNGQPEGTGEPVELKTQAL. N246 is modified (deamidated asparagine).

It belongs to the MIP/aquaporin (TC 1.A.8) family. Homotetramer; each monomer provides an independent water pore. Two homotetramers on opposing membranes can dimerize, forming a cell-cell junction. Interacts with CALM; the calcium-calmodulin/CALM complex interacts with the cytoplasmic domains of two aquaporins, leading to channel closure. Interacts with BFSP1 (via C-terminus); prevents calcium-dependent inhibition of the water channel activity. Subject to partial proteolytic cleavage in the eye lens core. Partial proteolysis promotes interactions between tetramers from adjoining membranes. Post-translationally, fatty acylated at Met-1 and Lys-238. The acyl modifications, in decreasing order of ion abundance, are: oleoyl (C18:1) &gt; palmitoyl (C16:0) &gt; stearoyl (C18:0) &gt; eicosenoyl (C20:1) &gt; dihomo-gamma-linolenoyl (C20:3) &gt; palmitoleoyl (C16:1) &gt; eicosadienoyl (C20:2).

The protein localises to the cell membrane. It is found in the cell junction. It catalyses the reaction H2O(in) = H2O(out). Its activity is regulated as follows. The water channel activity is inhibited by calcium through calmodulin/CALM. In terms of biological role, aquaporins form homotetrameric transmembrane channels, with each monomer independently mediating water transport across the plasma membrane along its osmotic gradient. Specifically expressed in lens fiber cells, this aquaporin is crucial for maintaining lens water homeostasis and transparency. Beyond water permeability, it also acts as a cell-to-cell adhesion molecule, forming thin junctions between lens fiber cells that are essential for maintaining the ordered structure and transparency of the lens. This is Lens fiber major intrinsic protein from Canis lupus familiaris (Dog).